A 619-amino-acid chain; its full sequence is Secretogranin-2 (619 aa).

Residues 1-30 form the signal peptide; sequence MTESKAYRFGAVLLLIHLIFLVPGTEAASF. Tyrosine 153 is modified (sulfotyrosine). A phosphoserine mark is found at serine 176 and serine 270. Positions 247 to 307 are disordered; that stretch reads VGGEDWSPME…RKESKDQLSE (61 aa). Composition is skewed to basic and acidic residues over residues 255-286 and 295-307; these read MEEKIETQTQEEVRDSKENTEKNEQINEEMKR and EGNRKESKDQLSE. Residues serine 434, serine 534, serine 557, and serine 558 each carry the phosphoserine modification.

The protein belongs to the chromogranin/secretogranin protein family. As to quaternary structure, interacts with Secretogranin III/SCG3. In terms of tissue distribution, brain. Expression in the pituitary is restricted to the anterior lobe. Expression in the hypothalamus is observed in the neuronal cells and neurons of arcuate nucleus, supraoptic nucleus and median eminence (at protein level).

The protein resides in the secreted. Neuroendocrine protein of the granin family that regulates the biogenesis of secretory granules. The sequence is that of Secretogranin-2 (Scg2) from Rattus norvegicus (Rat).